Here is a 284-residue protein sequence, read N- to C-terminus: tRNA pseudouridine synthase A (284 aa).

Residue Asp52 is the Nucleophile of the active site. Residue Tyr149 coordinates substrate.

The protein belongs to the tRNA pseudouridine synthase TruA family. As to quaternary structure, homodimer.

The enzyme catalyses uridine(38/39/40) in tRNA = pseudouridine(38/39/40) in tRNA. Functionally, formation of pseudouridine at positions 38, 39 and 40 in the anticodon stem and loop of transfer RNAs. This chain is tRNA pseudouridine synthase A, found in Orientia tsutsugamushi (strain Boryong) (Rickettsia tsutsugamushi).